A 211-amino-acid chain; its full sequence is MRLTAKQVTWLKVCLHLAGLLPFLWLVWAINHGGLGADPVKDIQHFTGRTALKFLLAALLITPLARYAKQPLLIRTRRLLGLWCFAWATLHLTSYALLELGVNNLALLGKELITRPYLTLGIISWVILLALAFTSTQSMQRKLGKHWQQLHNFVYLVAILAPIHYLWSVKIISPQPLIYAGLAVLLLALRYKKLLSLFNRLRKQAHNKLSL.

The next 6 helical transmembrane spans lie at 10–30 (WLKV…VWAI), 54–74 (FLLA…PLLI), 82–102 (LWCF…ELGV), 116–136 (PYLT…FTST), 153–173 (FVYL…KIIS), and 178–198 (IYAG…LSLF).

This sequence belongs to the MsrQ family. As to quaternary structure, heterodimer of a catalytic subunit (MsrP) and a heme-binding subunit (MsrQ). FMN is required as a cofactor. It depends on heme b as a cofactor.

It localises to the cell inner membrane. Functionally, part of the MsrPQ system that repairs oxidized periplasmic proteins containing methionine sulfoxide residues (Met-O), using respiratory chain electrons. Thus protects these proteins from oxidative-stress damage caused by reactive species of oxygen and chlorine generated by the host defense mechanisms. MsrPQ is essential for the maintenance of envelope integrity under bleach stress, rescuing a wide series of structurally unrelated periplasmic proteins from methionine oxidation, including the primary periplasmic chaperone SurA and the lipoprotein Pal. MsrQ provides electrons for reduction to the reductase catalytic subunit MsrP, using the quinone pool of the respiratory chain. This is Protein-methionine-sulfoxide reductase heme-binding subunit MsrQ from Escherichia coli O6:H1 (strain CFT073 / ATCC 700928 / UPEC).